Here is a 212-residue protein sequence, read N- to C-terminus: A-kinase-interacting protein 1 (212 aa).

Interacts with PRKACA and RELA.

Its subcellular location is the nucleus. In terms of biological role, enhances NF-kappa-B transcriptional activity by regulating the nuclear localization of the NF-kappa-B subunit RELA and promoting the phosphorylation of RELA by PRKACA. Regulates the effect of the cAMP-dependent protein kinase signaling pathway on the NF-kappa-B activation cascade. In Mus musculus (Mouse), this protein is A-kinase-interacting protein 1 (Akip1).